The chain runs to 71 residues: Serine palmitoyltransferase small subunit A (71 aa).

Residues 1 to 12 (MAGMALARAWKQ) are Cytoplasmic-facing. The helical transmembrane segment at 13–29 (MSWFYYQYLLVTALYML) threads the bilayer. Topologically, residues 30-34 (EPWER) are lumenal. A helical transmembrane segment spans residues 35-57 (TVFNSMLVSVVGMALYTGYVFMP). Topologically, residues 58–71 (QHIMAILHYFEIVQ) are cytoplasmic.

This sequence belongs to the SPTSS family. SPTSSA subfamily. In terms of assembly, component of the serine palmitoyltransferase (SPT) complex, which is composed of SPTLC1, SPTLC2 or SPTLC3 and SPTSSA or SPTSSB. The heterodimer consisting of SPTLC1 and SPTLC2/SPTLC3 forms the catalytic core of the enzyme, while SPTSSA or SPTSSB subunits determine substrate specificity. SPT also interacts with ORMDL proteins, especially ORMDL3, which negatively regulate SPT activity in the presence of ceramides. Interacts with MBOAT7; the interaction plays a role in MBOAT7 localization to mitochondria-associated membranes.

It localises to the endoplasmic reticulum membrane. It functions in the pathway lipid metabolism; sphingolipid metabolism. Functionally, component of the serine palmitoyltransferase multisubunit enzyme (SPT) that catalyzes the initial and rate-limiting step in sphingolipid biosynthesis by condensing L-serine and activated acyl-CoA (most commonly palmitoyl-CoA) to form long-chain bases. The SPT complex is composed of SPTLC1, SPTLC2 or SPTLC3 and SPTSSA or SPTSSB. Within this complex, the heterodimer consisting of SPTLC1 and SPTLC2/SPTLC3 forms the catalytic core. Within the SPT complex, SPTSSA stimulates the catalytic activity and plays a role in substrate specificity, which depends upon the overall complex composition. The SPTLC1-SPTLC2-SPTSSA complex shows a strong preference for C16-CoA substrate, while the SPTLC1-SPTLC3-SPTSSA isozyme uses both C14-CoA and C16-CoA as substrates, with a slight preference for C14-CoA. Independently of its action as a SPT component, may be involved in MBOAT7 localization to mitochondria-associated membranes, a membrane bridge between the endoplasmic reticulum and mitochondria, may hence affect MBOAT7-catalyzed incorporation of arachidonic acid into phosphatidylinositol. The protein is Serine palmitoyltransferase small subunit A of Mus musculus (Mouse).